Here is a 202-residue protein sequence, read N- to C-terminus: uncharacterized protein (202 aa).

Residues 178–202 form a disordered region; the sequence is VCSSEDSEADRYSDYGWGGPSSPFN.

This is an uncharacterized protein from Homo sapiens (Human).